Here is a 134-residue protein sequence, read N- to C-terminus: Small ribosomal subunit protein uS9 (134 aa).

Residues 109 to 134 are disordered; sequence DARRTEPHKPSKSTKGPRAKRQKSYR. Positions 118–134 are enriched in basic residues; it reads PSKSTKGPRAKRQKSYR.

The protein belongs to the universal ribosomal protein uS9 family.

This Methanococcus aeolicus (strain ATCC BAA-1280 / DSM 17508 / OCM 812 / Nankai-3) protein is Small ribosomal subunit protein uS9.